The following is a 319-amino-acid chain: Free fatty acid receptor 3 (319 aa).

The Extracellular segment spans residues 1–15 (MDTSFFPGNHWLFFS). The chain crosses the membrane as a helical span at residues 16–36 (VDLLVFLVGLPLNVMALVVFV). Residues 37–43 (NKLRRRP) are Cytoplasmic-facing. A helical membrane pass occupies residues 44 to 64 (VAVDLLLLNLTISDLLLLLFL). Residues 65 to 98 (PFRIVEAACGMKWILPFIFCPLSGFLFFTTIYLT) are Extracellular-facing. A disulfide bridge connects residues Cys-84 and Cys-165. The helical transmembrane segment at 99-119 (SLFLMTVSIERFLSVAYPLWY) threads the bilayer. The Cytoplasmic segment spans residues 120 to 127 (KTRPRLAQ). A helical transmembrane segment spans residues 128–148 (AGLVSGICWFLASAHCSVIYV). Over 149–183 (TEYWGNATYSQGTNGTCYLEFREDQLAILLPVRLE) the chain is Extracellular. A helical transmembrane segment spans residues 184 to 206 (MAVVLFMVPLCITSYCYSRLVWI). Over 207 to 218 (LSQGASRRRRKR) the chain is Cytoplasmic. Residues 219 to 239 (VMGLLVATLLIFFVCFGPYNM) form a helical membrane-spanning segment. Residues 240–254 (SHVVGYVRGESPTWR) lie on the Extracellular side of the membrane. The chain crosses the membrane as a helical span at residues 255-275 (SYVLLLSTLNSCIDPLVFYFS). The Cytoplasmic portion of the chain corresponds to 276–319 (SSKFQADFHQLLSRLIRACVPWTQEVSLELKVKNGEEPSKECPS).

This sequence belongs to the G-protein coupled receptor 1 family. As to expression, expressed in the sympathetic nervous system.

Its subcellular location is the cell membrane. Its function is as follows. G protein-coupled receptor that is activated by a major product of dietary fiber digestion, the short chain fatty acids (SCFAs), and that plays a role in the regulation of whole-body energy homeostasis and in intestinal immunity. In omnivorous mammals, the short chain fatty acids acetate, propionate and butyrate are produced primarily by the gut microbiome that metabolizes dietary fibers. SCFAs serve as a source of energy but also act as signaling molecules. That G protein-coupled receptor is probably coupled to the pertussis toxin-sensitive, G(i/o)-alpha family of G proteins. Its activation results in the formation of inositol 1,4,5-trisphosphate, the mobilization of intracellular calcium, the phosphorylation of the MAPK3/ERK1 and MAPK1/ERK2 kinases and the inhibition of intracellular cAMP accumulation. Activated by SCFAs and by beta-hydroxybutyrate, a ketone body produced by the liver upon starvation, it inhibits N-type calcium channels and modulates the activity of sympathetic neurons through a signaling cascade involving the beta and gamma subunits of its coupled G protein, phospholipase C and MAP kinases. Thereby, it may regulate energy expenditure through the control of the sympathetic nervous system that controls for instance heart rate. Upon activation by SCFAs accumulating in the intestine, it may also signal to the brain via neural circuits which in turn would regulate intestinal gluconeogenesis. May also control the production of hormones involved in whole-body energy homeostasis. May for instance, regulate blood pressure through renin secretion. May also regulate secretion of the PYY peptide by enteroendocrine cells and control gut motility, intestinal transit rate, and the harvesting of energy from SCFAs produced by gut microbiota. May also indirectly regulate the production of LEP/Leptin, a hormone acting on the CNS to inhibit food intake, in response to the presence of short-chain fatty acids in the intestine. Finally, may also play a role in glucose homeostasis. Besides its role in energy homeostasis, may play a role in intestinal immunity. May mediate the activation of the inflammatory and immune response by SCFAs in the gut, regulating the rapid production of chemokines and cytokines by intestinal epithelial cells. The polypeptide is Free fatty acid receptor 3 (Ffar3) (Rattus norvegicus (Rat)).